Here is a 548-residue protein sequence, read N- to C-terminus: Stretch-activated cation channel MID1 (548 aa).

Positions 1-20 (MIVWQALFVVYCLFTTSIHG) are cleaved as a signal peptide. Residues 21–341 (LFQDFNPFAN…YLTKKISNGD (321 aa)) are Extracellular-facing. N-linked (GlcNAc...) asparagine glycans are attached at residues asparagine 32, asparagine 70, asparagine 112, asparagine 125, asparagine 159, asparagine 175, asparagine 228, asparagine 238, asparagine 265, asparagine 282, asparagine 285, asparagine 291, and asparagine 324. The chain crosses the membrane as a helical span at residues 342–358 (GLSSVGGILFSHVYFTT). Residues 359–548 (RSTDVCSLIF…LMVIHPLDDT (190 aa)) lie on the Cytoplasmic side of the membrane.

In terms of assembly, forms an oligomer with a molecular mass of 200 kDa by disulfide bonds. Interacts with CCH1 to form a Ca(2+) influx channel. In terms of processing, N-glycosylated.

The protein resides in the cell membrane. Its function is as follows. Calcium-permeable, cation-selective stretch-activated channel (SAC) that functions together with CCH1 to mediate calcium entry into cells. Required during mating. Together with CCH1, essential for tolerance to iron stress, which leads to an increased oxidative poise, and to cold stress. This chain is Stretch-activated cation channel MID1 (MID1), found in Saccharomyces cerevisiae (strain ATCC 204508 / S288c) (Baker's yeast).